A 311-amino-acid polypeptide reads, in one-letter code: Phosphopantothenate--cysteine ligase (311 aa).

The residue at position 2 (A2) is an N-acetylalanine.

This sequence belongs to the PPC synthetase family. As to quaternary structure, homodimer.

It carries out the reaction (R)-4'-phosphopantothenate + L-cysteine + ATP = N-[(R)-4-phosphopantothenoyl]-L-cysteine + AMP + diphosphate + H(+). The catalysed reaction is (R)-4'-phosphopantothenate + L-cysteine + CTP = N-[(R)-4-phosphopantothenoyl]-L-cysteine + CMP + diphosphate + H(+). It functions in the pathway cofactor biosynthesis; coenzyme A biosynthesis; CoA from (R)-pantothenate: step 2/5. Functionally, catalyzes the second step in the biosynthesis of coenzyme A from vitamin B5, where cysteine is conjugated to 4'-phosphopantothenate to form 4-phosphopantothenoylcysteine. Has a preference for ATP over CTP as a cosubstrate. The sequence is that of Phosphopantothenate--cysteine ligase (Ppcs) from Mus musculus (Mouse).